Reading from the N-terminus, the 481-residue chain is Glutamyl-tRNA(Gln) amidotransferase subunit A (481 aa).

Catalysis depends on charge relay system residues K77 and S151. S175 acts as the Acyl-ester intermediate in catalysis.

This sequence belongs to the amidase family. GatA subfamily. As to quaternary structure, heterotrimer of A, B and C subunits.

The enzyme catalyses L-glutamyl-tRNA(Gln) + L-glutamine + ATP + H2O = L-glutaminyl-tRNA(Gln) + L-glutamate + ADP + phosphate + H(+). Allows the formation of correctly charged Gln-tRNA(Gln) through the transamidation of misacylated Glu-tRNA(Gln) in organisms which lack glutaminyl-tRNA synthetase. The reaction takes place in the presence of glutamine and ATP through an activated gamma-phospho-Glu-tRNA(Gln). This chain is Glutamyl-tRNA(Gln) amidotransferase subunit A, found in Rubrobacter xylanophilus (strain DSM 9941 / JCM 11954 / NBRC 16129 / PRD-1).